A 757-amino-acid polypeptide reads, in one-letter code: Amine oxidase [copper-containing] 2 (757 aa).

Residues 1–4 (MNLK) lie on the Cytoplasmic side of the membrane. A helical membrane pass occupies residues 5 to 25 (VLLLLLGLSFLTVFALVYVLL). At 26 to 757 (TRQGSFSQSP…NLPSFSYEGL (732 aa)) the chain is on the extracellular side. 3 N-linked (GlcNAc...) asparagine glycosylation sites follow: asparagine 133, asparagine 198, and asparagine 226. The active-site Proton acceptor is aspartate 381. An intrachain disulfide couples cysteine 399 to cysteine 425. Catalysis depends on tyrosine 466, which acts as the Schiff-base intermediate with substrate; via topaquinone. Tyrosine 466 is modified (2',4',5'-topaquinone). Cu(2+) contacts are provided by histidine 517 and histidine 519. Positions 526, 527, 528, 569, 638, 660, and 662 each coordinate Ca(2+). Asparagine 663 is a glycosylation site (N-linked (GlcNAc...) asparagine). Ca(2+) is bound by residues glutamate 664, aspartate 670, and leucine 671. Residue histidine 681 coordinates Cu(2+). A disulfide bridge links cysteine 731 with cysteine 738.

It belongs to the copper/topaquinone oxidase family. Homodimer; disulfide-linked. Probably forms heterodimers with AOC3. Cu(2+) serves as cofactor. Requires Ca(2+) as cofactor. It depends on L-topaquinone as a cofactor. In terms of processing, topaquinone (TPQ) is generated by copper-dependent autoxidation of a specific tyrosyl residue. Significantly much highly expressed in retina.

Its subcellular location is the cell membrane. The enzyme catalyses 2-phenylethylamine + O2 + H2O = 2-phenylacetaldehyde + H2O2 + NH4(+). It catalyses the reaction tryptamine + O2 + H2O = indole-3-acetaldehyde + H2O2 + NH4(+). It carries out the reaction tyramine + O2 + H2O = (4-hydroxyphenyl)acetaldehyde + H2O2 + NH4(+). In terms of biological role, catalyzes the oxidative deamination of primary amines to the corresponding aldehydes with the concomitant production of hydrogen peroxide and ammonia. Has a preference for 2-phenylethylamine, tryptamine and tyramine. Could also act on methylamine and benzylamine but much less efficiently. This Mus musculus (Mouse) protein is Amine oxidase [copper-containing] 2.